Reading from the N-terminus, the 542-residue chain is Keratin, type II cytoskeletal 75 (542 aa).

Positions 1 to 26 are enriched in polar residues; that stretch reads MSRQSTVTFHSGSRRGFSTASATTPT. Residues 1-44 are disordered; sequence MSRQSTVTFHSGSRRGFSTASATTPTAGRSRFSSVSVARSSGNS. Positions 1–139 are head; sequence MSRQSTVTFH…DPTIQRVRKE (139 aa). Low complexity predominate over residues 27–42; sequence AGRSRFSSVSVARSSG. The coil 1A stretch occupies residues 140–175; sequence EREQIKTLNNKFASFIDKVRFLEQQNKVLETKWNLL. Residues 140-453 form the IF rod domain; sequence EREQIKTLNN…KLLEGEECRL (314 aa). A linker 1 region spans residues 176 to 194; that stretch reads QEQGSRTVRQNLEPFFDAY. The coil 1B stretch occupies residues 195 to 287; that stretch reads VNDLRRQLDS…VYEAELSQMQ (93 aa). The interval 288–310 is linker 12; it reads NQVSDTSVVLSMDNNRSLDLDSI. Residues 311-449 form a coil 2 region; it reads IAEVKAQYED…ATYRKLLEGE (139 aa). Positions 450-542 are tail; sequence ECRLSGEGVS…TSSSRKSYKH (93 aa). Residues 514-542 are disordered; it reads TSSSRGPVGSGSSIKFVSSTSSSRKSYKH.

This sequence belongs to the intermediate filament family. In terms of assembly, heterodimer of a type I and a type II keratin. May associate with KRT17.

Its function is as follows. Plays a central role in hair and nail formation. Essential component of keratin intermediate filaments in the companion layer of the hair follicle. The polypeptide is Keratin, type II cytoskeletal 75 (Krt75) (Rattus norvegicus (Rat)).